The following is a 431-amino-acid chain: Glutamate-1-semialdehyde 2,1-aminomutase (431 aa).

Lys-265 carries the N6-(pyridoxal phosphate)lysine modification.

It belongs to the class-III pyridoxal-phosphate-dependent aminotransferase family. HemL subfamily. As to quaternary structure, homodimer. Requires pyridoxal 5'-phosphate as cofactor.

The protein localises to the cytoplasm. The catalysed reaction is (S)-4-amino-5-oxopentanoate = 5-aminolevulinate. It participates in porphyrin-containing compound metabolism; protoporphyrin-IX biosynthesis; 5-aminolevulinate from L-glutamyl-tRNA(Glu): step 2/2. The sequence is that of Glutamate-1-semialdehyde 2,1-aminomutase from Aliivibrio fischeri (strain MJ11) (Vibrio fischeri).